Here is a 999-residue protein sequence, read N- to C-terminus: Protein Smaug (999 aa).

Residues 1-37 (MKYATGTDNAMTSGISGQTNNSNSVSNEMQPTTSTPT) show a composition bias toward polar residues. Disordered stretches follow at residues 1–45 (MKYA…EATS), 50–69 (TATY…QSQP), and 321–370 (CSSV…GSSS). Over residues 321–338 (CSSVASSSMCPASGSRSS) the composition is skewed to low complexity. Phosphoserine is present on residues S564 and S575. The interval 583–763 (EFKPNYIKFH…KDLKFKLSKM (181 aa)) is interaction with cup. The 55-residue stretch at 600 to 654 (GIGLWLKSLRLHKYIELFKNMTYEEMLLITEDFLQSVGVTKGASHKLALCIDKLK) folds into the SAM domain. The segment at 773-892 (HVKPAGVGPN…HHHAQQMQQM (120 aa)) is disordered. Composition is skewed to polar residues over residues 801-822 (KNGS…NFSL) and 854-864 (HQPQYKSSSYP). S972 is modified (phosphoserine).

This sequence belongs to the SMAUG family. Interacts with oskar (osk). Binds to the 3'-UTR of nos. Interacts with cup, which in turn recruits eIF4-E, leading to an indirect interaction between smg and eIF4-E that prevents mRNA translation.

Its subcellular location is the cytoplasm. Its function is as follows. Translation regulator that binds to the 3'-UTR of specific mRNAs such as nanos (nos) and prevent their translation. Prevents translation of unlocalized nos in the bulk cytoplasm via the recruitment of cup. This Drosophila yakuba (Fruit fly) protein is Protein Smaug (smg).